Consider the following 278-residue polypeptide: 4-hydroxy-tetrahydrodipicolinate reductase (278 aa).

Residues 13–18 (GAAGKM) and 111–113 (GTT) contribute to the NAD(+) site. The active-site Proton donor/acceptor is the His-167. His-168 lines the (S)-2,3,4,5-tetrahydrodipicolinate pocket. The active-site Proton donor is Lys-171. A (S)-2,3,4,5-tetrahydrodipicolinate-binding site is contributed by 177–178 (GT).

The protein belongs to the DapB family.

It is found in the cytoplasm. The catalysed reaction is (S)-2,3,4,5-tetrahydrodipicolinate + NAD(+) + H2O = (2S,4S)-4-hydroxy-2,3,4,5-tetrahydrodipicolinate + NADH + H(+). The enzyme catalyses (S)-2,3,4,5-tetrahydrodipicolinate + NADP(+) + H2O = (2S,4S)-4-hydroxy-2,3,4,5-tetrahydrodipicolinate + NADPH + H(+). The protein operates within amino-acid biosynthesis; L-lysine biosynthesis via DAP pathway; (S)-tetrahydrodipicolinate from L-aspartate: step 4/4. Its function is as follows. Catalyzes the conversion of 4-hydroxy-tetrahydrodipicolinate (HTPA) to tetrahydrodipicolinate. The sequence is that of 4-hydroxy-tetrahydrodipicolinate reductase from Mastigocladus laminosus (Fischerella sp.).